The chain runs to 348 residues: 4-hydroxy-2-oxovalerate aldolase 3 (348 aa).

One can recognise a Pyruvate carboxyltransferase domain in the interval 8-260 (ITVHDMTLRD…ETGVDVWKIQ (253 aa)). Substrate is bound at residue 16–17 (RD). Residue D17 participates in Mn(2+) binding. H20 (proton acceptor) is an active-site residue. The substrate site is built by S170 and H199. The Mn(2+) site is built by H199 and H201. Y290 is a substrate binding site.

The protein belongs to the 4-hydroxy-2-oxovalerate aldolase family.

The enzyme catalyses (S)-4-hydroxy-2-oxopentanoate = acetaldehyde + pyruvate. This chain is 4-hydroxy-2-oxovalerate aldolase 3, found in Burkholderia lata (strain ATCC 17760 / DSM 23089 / LMG 22485 / NCIMB 9086 / R18194 / 383).